The primary structure comprises 566 residues: Putative sensory transducer protein YvaQ (566 aa).

An N-terminal signal peptide occupies residues M1–M31. A coiled-coil region spans residues D74 to K110. Residues I186–I206 form a helical membrane-spanning segment. The HAMP domain maps to R208–G261. A Methyl-accepting transducer domain is found at A280–F530. Residues S536–I566 adopt a coiled-coil conformation.

Belongs to the methyl-accepting chemotaxis (MCP) protein family.

The protein resides in the cell membrane. In terms of biological role, chemotactic-signal transducers respond to changes in the concentration of attractants and repellents in the environment, transduce a signal from the outside to the inside of the cell, and facilitate sensory adaptation through the variation of the level of methylation. Attractants increase the level of methylation while repellents decrease the level of methylation. This chain is Putative sensory transducer protein YvaQ (yvaQ), found in Bacillus subtilis (strain 168).